The primary structure comprises 293 residues: Aromatic amino acid exporter YddG (293 aa).

Over 1 to 6 (MTRQKA) the chain is Cytoplasmic. The EamA 1 domain maps to 6 to 137 (ATLIGLIAIV…LALVGVCWVL (132 aa)). A helical transmembrane segment spans residues 7–27 (TLIGLIAIVLWSTMVGLIRGV). Residues 28-33 (SEGLGP) are Periplasmic-facing. A helical transmembrane segment spans residues 34–54 (VGGAAAIYSLSGLLLIFTVGF). The Cytoplasmic portion of the chain corresponds to 55–62 (PRIRQIPK). Residues 63 to 83 (GYLLAGSLLFVSYEICLALSL) form a helical membrane-spanning segment. Over 84–92 (GYAATHHQA) the chain is Periplasmic. Residues 93-113 (IEVGMVNYLWPSLTILFAILF) traverse the membrane as a helical segment. Residues 114-118 (NGQKT) are Cytoplasmic-facing. The chain crosses the membrane as a helical span at residues 119–139 (NWLIVPGLLLALVGVCWVLGG). Topologically, residues 140-155 (DNGLHYDEIINNITTS) are periplasmic. A helical transmembrane segment spans residues 156–176 (PLSYFLAFIGAFIWAAYCTVT). The EamA 2 domain occupies 158 to 285 (SYFLAFIGAF…ALMVCGGSLL (128 aa)). Residues 177–182 (NKYARG) lie on the Cytoplasmic side of the membrane. The helical transmembrane segment at 183-203 (FNGITVFVLLTGASLWVYYFL) threads the bilayer. Topologically, residues 204–218 (TPQPEMIFSTPVMIK) are periplasmic. A helical transmembrane segment spans residues 219–239 (LISAAFTLGFAYAAWNVGILH). The Cytoplasmic segment spans residues 240-243 (GNVT). A helical transmembrane segment spans residues 244 to 264 (IMAVGSYFTPVLSSALAAVLL). The Periplasmic segment spans residues 265–267 (SAP). A helical transmembrane segment spans residues 268–288 (LSFSFWQGALMVCGGSLLCWL). At 289–293 (ATRRG) the chain is on the cytoplasmic side.

This sequence belongs to the drug/metabolite transporter (DMT) superfamily. Aromatic amino acid/paraquat exporter (ArAA/P-E) (TC 2.A.7.17) family.

It is found in the cell inner membrane. It carries out the reaction L-phenylalanine(in) = L-phenylalanine(out). The enzyme catalyses L-tyrosine(in) = L-tyrosine(out). It catalyses the reaction L-tryptophan(in) = L-tryptophan(out). The catalysed reaction is L-threonine(in) = L-threonine(out). It carries out the reaction L-methionine(in) = L-methionine(out). The enzyme catalyses L-lysine(in) = L-lysine(out). It catalyses the reaction L-glutamate(out) = L-glutamate(in). The catalysed reaction is L-valine(in) = L-valine(out). It carries out the reaction L-isoleucine(in) = L-isoleucine(out). Functionally, amino acid transporter with broad substrate specificity. Can transport various amino acids, including phenylalanine, tyrosine, tryptophan, L-threonine, L-methionine, L-lysine, L-glutamate, L-valine and L-isoleucine. Overexpression confers resistance to phenylalanine and increases export of phenylalanine, tyrosine and tryptophan. In Escherichia coli (strain K12), this protein is Aromatic amino acid exporter YddG (yddG).